Here is a 274-residue protein sequence, read N- to C-terminus: NH(3)-dependent NAD(+) synthetase (274 aa).

46 to 53 is an ATP binding site; the sequence is GISGGQDS. A Mg(2+)-binding site is contributed by Asp-52. Position 140 (Arg-140) interacts with deamido-NAD(+). An ATP-binding site is contributed by Thr-160. A Mg(2+)-binding site is contributed by Glu-165. Residues Lys-173 and Asp-180 each coordinate deamido-NAD(+). Lys-189 and Thr-211 together coordinate ATP. Deamido-NAD(+) is bound at residue 260–261; it reads HK.

Belongs to the NAD synthetase family. Homodimer.

It carries out the reaction deamido-NAD(+) + NH4(+) + ATP = AMP + diphosphate + NAD(+) + H(+). Its pathway is cofactor biosynthesis; NAD(+) biosynthesis; NAD(+) from deamido-NAD(+) (ammonia route): step 1/1. Its function is as follows. Catalyzes the ATP-dependent amidation of deamido-NAD to form NAD. Uses ammonia as a nitrogen source. The sequence is that of NH(3)-dependent NAD(+) synthetase from Streptococcus pyogenes serotype M1.